Consider the following 837-residue polypeptide: SLIT and NTRK-like protein 4 (837 aa).

Positions 1-18 (MFLWLFLIVSALISSTNA) are cleaved as a signal peptide. At 19–618 (DSDISVEICN…SPPGGPVPLS (600 aa)) the chain is on the extracellular side. LRR repeat units lie at residues 60 to 81 (NFYHLNFQNNFLNILYPNTFVN), 84 to 105 (HAVSLHLGNNKLQNIEGGAFLG), 108 to 129 (ALKQLHLNNNELKILRADTFLG), 132 to 153 (NLEYLQADYNLIKYIERGAFNK), 156 to 177 (KLKVLILNDNLISFLPDNIFRF), and 179 to 200 (SLTHLDIRGNRIQKLPYIGVLE). The N-linked (GlcNAc...) asparagine glycan is linked to N81. An LRRCT 1 domain is found at 213–264 (NPWNCSCDLLPLKAWLENMPYNIYIGEAICETPSDLYGRLLKETNKQELCPM). Residue N325 is glycosylated (N-linked (GlcNAc...) asparagine). In terms of domain architecture, LRRNT spans 333-375 (QTRVPPLTPCPVPCFCKTHPSDLGLSVNCQEKNIQSMSELTPK). 6 LRR repeats span residues 378 to 399 (NAKKLHVNGNNIKDVDISDFTE), 402 to 423 (GLDLLHLGSNQITLIKGEVFHN), 426 to 447 (NLRRLYLNGNQIERLYPEIFSG), 450 to 471 (NLQYLYLEYNLIKEILAGTFDS), 474 to 495 (NLQLLYLNNNLLKSLPVYIFSG), and 497 to 518 (PLARLNLRNNKFMYLPVSGVLD). Residue N423 is glycosylated (N-linked (GlcNAc...) asparagine). One can recognise an LRRCT 2 domain in the interval 531–582 (NPWDCTCDLVALKLWLEKLNDGIVVKELKCETPVQFANIELKSLKNEILCPK). Residues 619–639 (ILILSILVVLILTVFVAFCLL) form a helical membrane-spanning segment. The Cytoplasmic portion of the chain corresponds to 640–837 (VFVLRRNKKP…LEEQTALNKI (198 aa)).

Belongs to the SLITRK family. Interacts (via LRR 1 and 2 repeats) with PTPRD (via extracellular domain). As to expression, in the adult, significant expression is detected only in the brain. Broadly expressed in embryonic brain with highest expression in subventricular zone, subplate, cortical plate, pyramidal cell layer of hippocampus, thalamus and hypothalamus.

It is found in the membrane. Its subcellular location is the cell membrane. In terms of biological role, it is involved in synaptogenesis and promotes synapse differentiation. Suppresses neurite outgrowth. In Mus musculus (Mouse), this protein is SLIT and NTRK-like protein 4 (Slitrk4).